A 198-amino-acid polypeptide reads, in one-letter code: Superoxide dismutase [Fe] (198 aa).

Fe cation-binding residues include histidine 27, histidine 74, aspartate 157, and histidine 161.

Belongs to the iron/manganese superoxide dismutase family. In terms of assembly, homodimer. Fe cation is required as a cofactor.

The catalysed reaction is 2 superoxide + 2 H(+) = H2O2 + O2. Its function is as follows. Destroys superoxide anion radicals which are normally produced within the cells and which are toxic to biological systems. In Pseudomonas putida (strain ATCC 47054 / DSM 6125 / CFBP 8728 / NCIMB 11950 / KT2440), this protein is Superoxide dismutase [Fe] (sodB).